Reading from the N-terminus, the 34-residue chain is Photosystem II reaction center protein T (34 aa).

A helical transmembrane segment spans residues Ala-3–Phe-23.

It belongs to the PsbT family. PSII is composed of 1 copy each of membrane proteins PsbA, PsbB, PsbC, PsbD, PsbE, PsbF, PsbH, PsbI, PsbJ, PsbK, PsbL, PsbM, PsbT, PsbY, PsbZ, Psb30/Ycf12, at least 3 peripheral proteins of the oxygen-evolving complex and a large number of cofactors. It forms dimeric complexes.

It is found in the plastid. The protein localises to the chloroplast thylakoid membrane. Its function is as follows. Found at the monomer-monomer interface of the photosystem II (PS II) dimer, plays a role in assembly and dimerization of PSII. PSII is a light-driven water plastoquinone oxidoreductase, using light energy to abstract electrons from H(2)O, generating a proton gradient subsequently used for ATP formation. The chain is Photosystem II reaction center protein T from Atropa belladonna (Belladonna).